The following is a 520-amino-acid chain: RING-type E3 ubiquitin-protein ligase PPIL2 (520 aa).

The U-box domain occupies R35–T108. Residues L197 to G217 adopt a coiled-coil conformation. A Glycyl lysine isopeptide (Lys-Gly) (interchain with G-Cter in SUMO2) cross-link involves residue K216. Residues K278–V433 form the PPIase cyclophilin-type domain. The interval A456–W520 is disordered. The segment covering S463–Q474 has biased composition (low complexity). S470 bears the Phosphoserine mark. An N6-acetyllysine modification is found at K482.

This sequence belongs to the cyclophilin-type PPIase family. PPIL2 subfamily. As to quaternary structure, component of the minor spliceosome, which splices U12-type introns. Within this complex, interacts with PRPF8/PRP8, EFTUD2/SNU114 and PLRG1. Interacts with isoform 2 of BSG. Interacts (via the PPIase cyclophilin-type domain) with CRNKL1; they may form a trimeric complex with HSP90. As to expression, highest expression in thymus, pancreas and testis. Also detected in heart, placenta, lung, liver, skeletal muscle, kidney, spleen, prostate, ovary, small intestine and colon. Poorly detected in brain and leukocytes. Strong protein expression in lymph node (cortical, paracortical and medullar regions), thyroid (follicular epithelial cells), testis (developing spermatozoa), stomach (cells lining the gastric pit), pancreas, kidney (proximal and distal-tubule cells and collecting duct cells but not in glomeruli), endometrium and colon (goblet cells). Moderate protein expression in spleen, prostate (epithelium and squamous cell carcinomas), placenta and adrenal gland. Weak protein expression in liver, heart, breast, ovary, and lung. No protein expression in brain and bladder. High protein expression in most lymphomas and melanomas.

Its subcellular location is the nucleus. The enzyme catalyses S-ubiquitinyl-[E2 ubiquitin-conjugating enzyme]-L-cysteine + [acceptor protein]-L-lysine = [E2 ubiquitin-conjugating enzyme]-L-cysteine + N(6)-ubiquitinyl-[acceptor protein]-L-lysine.. It functions in the pathway protein modification; protein ubiquitination. Functionally, has a ubiquitin-protein ligase activity acting as an E3 ubiquitin protein ligase or as an ubiquitin-ubiquitin ligase promoting elongation of ubiquitin chains on substrates. By mediating 'Lys-48'-linked polyubiquitination of proteins could target them for proteasomal degradation. May also function as a chaperone, playing a role in transport to the cell membrane of BSG/Basigin for instance. Probable inactive PPIase with no peptidyl-prolyl cis-trans isomerase activity. As a component of the minor spliceosome, involved in the splicing of U12-type introns in pre-mRNAs. This is RING-type E3 ubiquitin-protein ligase PPIL2 from Homo sapiens (Human).